The primary structure comprises 139 residues: Large-conductance mechanosensitive channel (139 aa).

The next 3 helical transmembrane spans lie at 10-30, 40-60, and 80-100; these read FAVK…AAFG, VIMP…YYIA, and LAYG…FIIF.

Belongs to the MscL family. As to quaternary structure, homopentamer.

Its subcellular location is the cell inner membrane. In terms of biological role, channel that opens in response to stretch forces in the membrane lipid bilayer. May participate in the regulation of osmotic pressure changes within the cell. This Janthinobacterium sp. (strain Marseille) (Minibacterium massiliensis) protein is Large-conductance mechanosensitive channel.